The sequence spans 102 residues: Small ribosomal subunit protein uS10 (102 aa).

Belongs to the universal ribosomal protein uS10 family. As to quaternary structure, part of the 30S ribosomal subunit.

Functionally, involved in the binding of tRNA to the ribosomes. In Staphylococcus saprophyticus subsp. saprophyticus (strain ATCC 15305 / DSM 20229 / NCIMB 8711 / NCTC 7292 / S-41), this protein is Small ribosomal subunit protein uS10.